Here is a 50-residue protein sequence, read N- to C-terminus: Large ribosomal subunit protein bL33 (50 aa).

The protein belongs to the bacterial ribosomal protein bL33 family.

The sequence is that of Large ribosomal subunit protein bL33 from Koribacter versatilis (strain Ellin345).